Consider the following 154-residue polypeptide: Nucleoside diphosphate kinase (154 aa).

ATP is bound by residues K12, F60, R88, T94, R105, and N115. The active-site Pros-phosphohistidine intermediate is H118.

Belongs to the NDK family. It depends on Mg(2+) as a cofactor.

It localises to the cytoplasm. It catalyses the reaction a 2'-deoxyribonucleoside 5'-diphosphate + ATP = a 2'-deoxyribonucleoside 5'-triphosphate + ADP. The catalysed reaction is a ribonucleoside 5'-diphosphate + ATP = a ribonucleoside 5'-triphosphate + ADP. In terms of biological role, major role in the synthesis of nucleoside triphosphates other than ATP. The ATP gamma phosphate is transferred to the NDP beta phosphate via a ping-pong mechanism, using a phosphorylated active-site intermediate. This Haloarcula marismortui (strain ATCC 43049 / DSM 3752 / JCM 8966 / VKM B-1809) (Halobacterium marismortui) protein is Nucleoside diphosphate kinase.